The following is a 126-amino-acid chain: Large ribosomal subunit protein bL12 (126 aa).

It belongs to the bacterial ribosomal protein bL12 family. In terms of assembly, homodimer. Part of the ribosomal stalk of the 50S ribosomal subunit. Forms a multimeric L10(L12)X complex, where L10 forms an elongated spine to which 2 to 4 L12 dimers bind in a sequential fashion. Binds GTP-bound translation factors.

In terms of biological role, forms part of the ribosomal stalk which helps the ribosome interact with GTP-bound translation factors. Is thus essential for accurate translation. In Solibacter usitatus (strain Ellin6076), this protein is Large ribosomal subunit protein bL12.